A 243-amino-acid polypeptide reads, in one-letter code: Myrosinase MB2 (243 aa).

Residue Asn-30 is glycosylated (N-linked (GlcNAc...) asparagine). Tyr-51 provides a ligand contact to substrate. The Nucleophile role is filled by Glu-125. Residues Trp-173 and 180-181 (EF) contribute to the substrate site. N-linked (GlcNAc...) asparagine glycosylation occurs at Asn-216.

This sequence belongs to the glycosyl hydrolase 1 family. Homodimer. In terms of tissue distribution, in vacuoles called myrosin grains of a certain class of cells, myrosin cells, distributed in the cotyledons and the axis of the embryo as well as in different organs of the growing plant.

Its subcellular location is the vacuole. It catalyses the reaction a thioglucoside + H2O = a sugar + a thiol.. Functionally, degradation of glucosinolates (glucose residue linked by a thioglucoside bound to an amino acid derivative) to glucose, sulfate and any of the products: thiocyanates, isothiocyanates, nitriles, epithionitriles or oxazolidine-2-thiones. This is Myrosinase MB2 from Sinapis alba (White mustard).